We begin with the raw amino-acid sequence, 431 residues long: Galanin-like G-protein coupled receptor npr-9 (431 aa).

The Extracellular portion of the chain corresponds to 1 to 34 (MEFENLTKEEMEQLQKIYDDTISFERKIGIIIPT). Asparagine 5 is a glycosylation site (N-linked (GlcNAc...) asparagine). The helical transmembrane segment at 35 to 55 (IFAVIILVGLVGNALVVIVAF) threads the bilayer. The Cytoplasmic segment spans residues 56–66 (GRQMRNSTNTL). A helical transmembrane segment spans residues 67–87 (IIGLAISDLMFLLLCVPFTAV). At 88–101 (DYAAPTWIFPEWTC) the chain is on the extracellular side. A disulfide bridge connects residues cysteine 101 and cysteine 182. A helical transmembrane segment spans residues 102-124 (SMINFFQHTSAYCSVWTLTLMAL). The Cytoplasmic portion of the chain corresponds to 125-143 (DRYLAVVYPVESMTLRTPR). The helical transmembrane segment at 144–164 (NTVIALCFIYIIIIASQIPVG) threads the bilayer. Residues 165–203 (RMHGIYVYDFIMEKRSTCAILTIATAEATPTMARTYFMT) lie on the Extracellular side of the membrane. Residues 204–224 (FNVFGYVLPLGISVVLYGLML) traverse the membrane as a helical segment. Over 225-268 (RKLWDMPRPGNSQSVGGRNLTNRDSGSSIRRRPEATAAKRKVTR) the chain is Cytoplasmic. Over residues 235–252 (NSQSVGGRNLTNRDSGSS) the composition is skewed to polar residues. The interval 235–257 (NSQSVGGRNLTNRDSGSSIRRRP) is disordered. A helical membrane pass occupies residues 269 to 289 (LVLCVLITWALCWLPLNVCFF). Over 290–298 (MSGLAYPEP) the chain is Extracellular. Residues 299–319 (LVISHGVIMVIVQIASQVLAY) form a helical membrane-spanning segment. The Cytoplasmic portion of the chain corresponds to 320–431 (TNSCLNPILY…RSKSTRSYNL (112 aa)). The segment covering 393 to 414 (SLLKDNSSSATSVQPLRTSIQA) has biased composition (polar residues). The segment at 393 to 431 (SLLKDNSSSATSVQPLRTSIQAKKTKNIGRSKSTRSYNL) is disordered. Basic residues predominate over residues 415 to 425 (KKTKNIGRSKS).

This sequence belongs to the G-protein coupled receptor 1 family. As to expression, exclusively expressed in the AIB interneuron.

The protein resides in the cell membrane. In terms of biological role, neuropeptide that controls movement such as roaming, foraging and backwards locomotion or 'reversals' in response to environmental cues such as food availability or volatile odorants such as octanol. Antagonizes AIB interneuron activity to control bacterial colonization and may negatively regulate the expression of immunity-related genes such as pqm-1 and dod-22 in response to infection by P.aeruginosa. The polypeptide is Galanin-like G-protein coupled receptor npr-9 (Caenorhabditis elegans).